The chain runs to 150 residues: Large ribosomal subunit protein uL15 (150 aa).

Residues 1-49 (MELHQLKSVSKSRNHKSKVVGRGHGSGLGKTSSRGQKGQKARKSGLTRL) form a disordered region. Positions 10–21 (SKSRNHKSKVVG) are enriched in basic residues.

Belongs to the universal ribosomal protein uL15 family. In terms of assembly, part of the 50S ribosomal subunit.

Functionally, binds to the 23S rRNA. The protein is Large ribosomal subunit protein uL15 of Mycoplasma genitalium (strain ATCC 33530 / DSM 19775 / NCTC 10195 / G37) (Mycoplasmoides genitalium).